The primary structure comprises 337 residues: Casein kinase I isoform alpha (337 aa).

One can recognise a Protein kinase domain in the interval 20–288; sequence YRVIRKIGSG…YLRQLFRILF (269 aa). ATP-binding positions include 26–34 and lysine 49; that span reads IGSGSFGDI. Aspartate 139 serves as the catalytic Proton acceptor.

The protein belongs to the protein kinase superfamily. CK1 Ser/Thr protein kinase family. Casein kinase I subfamily. Interacts with cos. The cofactor is Mg(2+). In terms of processing, phosphorylated. The dephosphorylated kinase is active in the cytoplasm while the active kinase in the nucleus is phosphorylated.

The protein localises to the cytoplasm. It localises to the nucleus. The catalysed reaction is L-seryl-[protein] + ATP = O-phospho-L-seryl-[protein] + ADP + H(+). It catalyses the reaction L-threonyl-[protein] + ATP = O-phospho-L-threonyl-[protein] + ADP + H(+). Its activity is regulated as follows. Activity increases following DNA damage. In terms of biological role, casein kinases are operationally defined by their preferential utilization of acidic proteins such as caseins as substrates. Can phosphorylate a large number of proteins. Negative regulator of wg signaling. Phosphorylates arm directly or indirectly and stimulates its degradation which prevents inappropriate wg signaling. Phosphorylates smo which promotes its accumulation at the cell surface and its signaling activity in response to hh. Together with dco, regulates proteolytic processing of ci by phosphorylating it, which promotes its binding to slmb, the F-box recognition component of the SCF(slmb) E3 ubiquitin-protein ligase required for ci processing. Inhibits condensin II interphase activity by promoting degradation of the Cap-H2 regulatory subunit and limiting the levels of chromatin-bound Cap-H2 which regulates interphase chromosome organization. The protein is Casein kinase I isoform alpha (CkIalpha) of Drosophila melanogaster (Fruit fly).